Consider the following 612-residue polypeptide: Protein tipD (612 aa).

Positions 95–128 (RNEKKTQQQPPSGSSKMDSSSSSSSSNRVSGMGS) are disordered. The segment covering 106–128 (SGSSKMDSSSSSSSSNRVSGMGS) has biased composition (low complexity). WD repeat units follow at residues 322 to 361 (GHNS…QKST), 364 to 403 (GASQ…SRHT), 406 to 444 (GHIG…CTRT), 447 to 486 (CFSS…PTQV), 490 to 530 (IHEG…TIRT), 535 to 576 (EYRN…TVKV), and 582 to 611 (NNGS…IIQW).

The protein belongs to the WD repeat tipD family.

Its function is as follows. Not known; disruption of the gene for tipD results in morphological defects. This is Protein tipD (tipD) from Dictyostelium discoideum (Social amoeba).